The chain runs to 439 residues: Tol-Pal system protein TolB (439 aa).

The N-terminal stretch at Met1–Thr22 is a signal peptide.

This sequence belongs to the TolB family. In terms of assembly, the Tol-Pal system is composed of five core proteins: the inner membrane proteins TolA, TolQ and TolR, the periplasmic protein TolB and the outer membrane protein Pal. They form a network linking the inner and outer membranes and the peptidoglycan layer.

It is found in the periplasm. In terms of biological role, part of the Tol-Pal system, which plays a role in outer membrane invagination during cell division and is important for maintaining outer membrane integrity. The chain is Tol-Pal system protein TolB from Xylella fastidiosa (strain M12).